The primary structure comprises 455 residues: UDP-glycosyltransferase 87A2 (455 aa).

An N-acetylmethionine modification is found at M1. UDP-alpha-D-glucose-binding positions include S278, 327–329, 344–352, and 366–369; these read CDQ, HCGFNSTLE, and FWDQ.

The protein belongs to the UDP-glycosyltransferase family.

The protein is UDP-glycosyltransferase 87A2 (UGT87A2) of Arabidopsis thaliana (Mouse-ear cress).